The following is a 620-amino-acid chain: 1-deoxy-D-xylulose-5-phosphate synthase (620 aa).

Thiamine diphosphate is bound by residues histidine 80 and 121 to 123 (GHS). Residue aspartate 152 coordinates Mg(2+). Thiamine diphosphate is bound by residues 153–154 (GA), asparagine 181, tyrosine 288, and glutamate 370. Asparagine 181 provides a ligand contact to Mg(2+).

Belongs to the transketolase family. DXPS subfamily. As to quaternary structure, homodimer. It depends on Mg(2+) as a cofactor. Thiamine diphosphate is required as a cofactor.

It carries out the reaction D-glyceraldehyde 3-phosphate + pyruvate + H(+) = 1-deoxy-D-xylulose 5-phosphate + CO2. It functions in the pathway metabolic intermediate biosynthesis; 1-deoxy-D-xylulose 5-phosphate biosynthesis; 1-deoxy-D-xylulose 5-phosphate from D-glyceraldehyde 3-phosphate and pyruvate: step 1/1. Catalyzes the acyloin condensation reaction between C atoms 2 and 3 of pyruvate and glyceraldehyde 3-phosphate to yield 1-deoxy-D-xylulose-5-phosphate (DXP). This chain is 1-deoxy-D-xylulose-5-phosphate synthase, found in Escherichia coli O127:H6 (strain E2348/69 / EPEC).